Reading from the N-terminus, the 104-residue chain is AVIToxin-VAR1 (104 aa).

A signal peptide spans 1–19 (MRSLLCAPLLLLLLSAGES). Intrachain disulfides connect cysteine 26–cysteine 38, cysteine 32–cysteine 50, cysteine 37–cysteine 78, cysteine 60–cysteine 86, and cysteine 80–cysteine 96.

It belongs to the AVIT (prokineticin) family. In terms of tissue distribution, expressed by the venom gland.

The protein resides in the secreted. Potent agonist for both PKR1/PROKR1 and PKR2/PROKR2. Potently contracts gastrointestinal (GI) smooth muscle. The sequence is that of AVIToxin-VAR1 from Varanus varius (Lace monitor lizard).